The sequence spans 661 residues: MLLDGTLIQLLFLLGFMVFMVMLFQRAHIPASIAYLLVGVLLGAHTAGPVISEGYIHKIAEFGIVFLLFTIGLRFSWQQIYQLRHTILGLGTAQVGLTTLLVALLLWAMGVASVVAFVIGAVFAQSSTTIISKQLLEQGEDQSRHGRLGISLSVFQDITAVPFIIVIPVLGVAMAQDIASTLGMALFKAVLATALVVLVGRYLLRHLFHRVSSSDSAELFTLTVLLVCLAAAWLTQSLGLSMAFGAFLAGMVMGETEFKLQVEAAIRPFRDVLLGIFFVSIGMLLDPMLLPEIGHIALAGALLLLLIKIVLVTALVLATGVALETAFRTGLILAVGGEFGFALLALALEGGTLDSRSSQIILTSVLLSMMLAVFLIRYNLQLSRFVVGRWIGQAAVSSEPFDDIEQHGLQQHVVIAGFGRIGQGVAQFLQKEQVPYIGLDLDAARVKNARLADVPVFYADSTDPDTLIAVGLAKARLLVISHEDLSAALTTLRHARTLHPDLPVIVRTRDESHVAELRQAGATEVIPETIEAGMMLTSHVLLMLNVPARRVNQLVQEQRINRYQLLRQQFRGSADLLKTQQQEQLKAVLLAEGSPAIDQSLQMLDLAQYGIQLTELVRAHNRIEQPSLDMVLQENDVLVLFGSAEALEQASLVLTHRLAAD.

The next 11 helical transmembrane spans lie at 5 to 25, 31 to 51, 53 to 73, 100 to 120, 154 to 174, 178 to 198, 224 to 244, 273 to 293, 296 to 316, 330 to 350, and 360 to 380; these read GTLIQLLFLLGFMVFMVMLFQ, ASIAYLLVGVLLGAHTAGPVI, EGYIHKIAEFGIVFLLFTIGL, LLVALLLWAMGVASVVAFVIG, VFQDITAVPFIIVIPVLGVAM, IASTLGMALFKAVLATALVVL, VLLVCLAAAWLTQSLGLSMAF, LLGIFFVSIGMLLDPMLLPEI, IALAGALLLLLIKIVLVTALV, GLILAVGGEFGFALLALALEG, and IILTSVLLSMMLAVFLIRYNL. Residues 410–527 form the RCK N-terminal domain; sequence QQHVVIAGFG…RQAGATEVIP (118 aa). Positions 571–656 constitute an RCK C-terminal domain; sequence RGSADLLKTQ…LEQASLVLTH (86 aa).

Belongs to the monovalent cation:proton antiporter 2 (CPA2) transporter (TC 2.A.37) family. KEA (TC 2.A.37.1) subfamily.

The protein resides in the cell membrane. Its function is as follows. May operate as a K(+)/H(+) antiporter. The chain is Putative K(+) efflux antiporter KefB (kefB) from Alkalimonas amylolytica.